We begin with the raw amino-acid sequence, 511 residues long: Sodium/hydrogen exchanger 9B1 (511 aa).

Positions 1–10 (MHTTESKDEH) are enriched in basic and acidic residues. Residues 1-41 (MHTTESKDEHLEDENFQTSTTPQSLIDPNSTAHEETKTVIS) form a disordered region. Residues 16–31 (FQTSTTPQSLIDPNST) show a composition bias toward polar residues. A run of 13 helical transmembrane segments spans residues 67-87 (IITN…VLGS), 95-115 (LFGL…LQLI), 116-136 (RIPL…GFTI), 152-172 (WSSI…GLGL), 187-207 (LAVG…HFIM), 215-235 (FLLG…SMMV), 260-280 (VLAI…GGIV), 284-304 (IASI…GFFV), 337-357 (IGLH…AGTK), 368-388 (IITN…GAEV), 398-418 (IGIF…VTYI), 431-451 (IFIA…GPLV), and 472-492 (VAFL…GILG).

It belongs to the monovalent cation:proton antiporter 1 (CPA1) transporter (TC 2.A.36) family.

Its subcellular location is the cell projection. It localises to the cilium. The protein localises to the flagellum membrane. Its function is as follows. Sperm-specific Na(+)/H(+) exchanger involved in intracellular pH regulation of spermatozoa. Involved in sperm motility and fertility. This is Sodium/hydrogen exchanger 9B1 (SLC9B1) from Macaca fascicularis (Crab-eating macaque).